The following is a 121-amino-acid chain: Large ribosomal subunit protein uL18 (121 aa).

This sequence belongs to the universal ribosomal protein uL18 family. Part of the 50S ribosomal subunit; part of the 5S rRNA/L5/L18/L25 subcomplex. Contacts the 5S and 23S rRNAs.

Functionally, this is one of the proteins that bind and probably mediate the attachment of the 5S RNA into the large ribosomal subunit, where it forms part of the central protuberance. The chain is Large ribosomal subunit protein uL18 from Pelobacter propionicus (strain DSM 2379 / NBRC 103807 / OttBd1).